The sequence spans 65 residues: Ferredoxin soy (65 aa).

The 28-residue stretch at 2–29 (GVQVDKERCVGAGMCALTAPDVFTQDDD) folds into the 4Fe-4S ferredoxin-type domain. [3Fe-4S] cluster is bound by residues C10, C16, and C55.

[3Fe-4S] cluster serves as cofactor.

Its function is as follows. Electron transport protein for the cytochrome P-450-SOY system. The chain is Ferredoxin soy (soyB) from Streptomyces griseus.